The chain runs to 630 residues: MTSIGIDLGTTYSCVGVWLNDRVEIIANDQGNRTTPSYVAFNDTERLIGDAAKNQVAMNPINTVFDAKRLIGRKFSDSVVQSDMKHWPFKVITNKNDDKPLIQVDFKGETKTFSPEEISSMVLSKMKETAESYLGKPVNNAVITVPAYFNDGQRQATKDAGTISKLNVQRIINEPSAAAIAYGLDKKGSKSGEIKVLIFDLGGGTFDVSLLSIDDGVFEVLATAGDTHLGGEDFDNRLVNHFVDEFKRKHKKDIMGNQRALRRLRTACERAKRTLSSSSQASVEIDSLYDGIDFYTSITRARFEELCSDLFNNCIEPVEKVLKDCKLDKKSIDEIVLVGGSTRIPKVQQLIQNLFNGKELNKSINPDEAVAYGAAVQAAILSGDKSSRISELIFIDVAPLSLGIETVGGVMTNIVPRNTIIPCKKTQTFSTHTDNQSGVLIQVYEGERTMTKDNNLLGKFELTGIPPAPRGTPQIEVSFDVDSNGILNVTAEDKTTKKVEKITITNDKGRLSLKDITKMVEDAEKFKEQDQQQKERIESKNNLENYIFSVKNSINDQKIISKLSKSDKNIIESETESTLKWLESNQSAEKDEFNQKISDLESIVNPILSKFYQGNNNPKPTTTTFNQDLD.

The interval 611–630 is disordered; sequence FYQGNNNPKPTTTTFNQDLD. The span at 615 to 630 shows a compositional bias: low complexity; that stretch reads NNNPKPTTTTFNQDLD.

It belongs to the heat shock protein 70 family.

Functionally, may function in protein folding and assembly, and disassembly of protein complexes. The chain is Heat shock cognate 70 kDa protein 3 from Dictyostelium discoideum (Social amoeba).